Reading from the N-terminus, the 379-residue chain is Cytochrome b (379 aa).

The next 4 membrane-spanning stretches (helical) occupy residues 34–54 (FGSLLGICLITQILTGLLLAM), 78–99 (WLIRNLHANGASFFFICIYLHI), 114–134 (WNTGVVLLLTLMATAFVGYVL), and 179–199 (FFALHFLLPFLIAGITLIHLT). 2 residues coordinate heme b: histidine 84 and histidine 98. The heme b site is built by histidine 183 and histidine 197. A ubiquinone is bound at residue histidine 202. Transmembrane regions (helical) follow at residues 227–247 (LKDALGFALMFIPLLTLAFFS), 289–309 (LGGVLALAASVLILFLIPFLH), 321–341 (LSQILFWLLVANLLILTWIGS), and 348–368 (FIIIGQMASFSYFLILLVLFP).

Belongs to the cytochrome b family. As to quaternary structure, the cytochrome bc1 complex contains 11 subunits: 3 respiratory subunits (MT-CYB, CYC1 and UQCRFS1), 2 core proteins (UQCRC1 and UQCRC2) and 6 low-molecular weight proteins (UQCRH/QCR6, UQCRB/QCR7, UQCRQ/QCR8, UQCR10/QCR9, UQCR11/QCR10 and a cleavage product of UQCRFS1). This cytochrome bc1 complex then forms a dimer. It depends on heme b as a cofactor.

It localises to the mitochondrion inner membrane. Functionally, component of the ubiquinol-cytochrome c reductase complex (complex III or cytochrome b-c1 complex) that is part of the mitochondrial respiratory chain. The b-c1 complex mediates electron transfer from ubiquinol to cytochrome c. Contributes to the generation of a proton gradient across the mitochondrial membrane that is then used for ATP synthesis. The chain is Cytochrome b (MT-CYB) from Rhea americana (Greater rhea).